We begin with the raw amino-acid sequence, 113 residues long: N-alpha-acetyltransferase 38-A, NatC auxiliary subunit (113 aa).

The disordered stretch occupies residues Met-1 to Ala-29. A Sm domain is found at Thr-28–Ser-106.

Belongs to the snRNP Sm proteins family. As to quaternary structure, component of the N-terminal acetyltransferase C (NatC) complex, which is composed of naa35, naa38 and naa30.

The protein localises to the cytoplasm. In terms of biological role, auxillary component of the N-terminal acetyltransferase C (NatC) complex which catalyzes acetylation of N-terminal methionine residues. This is N-alpha-acetyltransferase 38-A, NatC auxiliary subunit (naa38-a) from Xenopus laevis (African clawed frog).